Consider the following 356-residue polypeptide: DNA polymerase IV (356 aa).

In terms of domain architecture, UmuC spans 6–187; sequence IIHIDMDAFY…QPIRRLHGVG (182 aa). The Mg(2+) site is built by aspartate 10 and aspartate 105. The active site involves glutamate 106.

Belongs to the DNA polymerase type-Y family. In terms of assembly, monomer. Requires Mg(2+) as cofactor.

The protein resides in the cytoplasm. The enzyme catalyses DNA(n) + a 2'-deoxyribonucleoside 5'-triphosphate = DNA(n+1) + diphosphate. Functionally, poorly processive, error-prone DNA polymerase involved in untargeted mutagenesis. Copies undamaged DNA at stalled replication forks, which arise in vivo from mismatched or misaligned primer ends. These misaligned primers can be extended by PolIV. Exhibits no 3'-5' exonuclease (proofreading) activity. May be involved in translesional synthesis, in conjunction with the beta clamp from PolIII. The chain is DNA polymerase IV from Halorhodospira halophila (strain DSM 244 / SL1) (Ectothiorhodospira halophila (strain DSM 244 / SL1)).